An 880-amino-acid chain; its full sequence is Valine--tRNA ligase (880 aa).

Positions proline 49 to histidine 59 match the 'HIGH' region motif. A 'KMSKS' region motif is present at residues lysine 525–serine 529. Lysine 528 provides a ligand contact to ATP. A coiled-coil region spans residues leucine 809–arginine 880.

It belongs to the class-I aminoacyl-tRNA synthetase family. ValS type 1 subfamily. In terms of assembly, monomer.

It localises to the cytoplasm. The catalysed reaction is tRNA(Val) + L-valine + ATP = L-valyl-tRNA(Val) + AMP + diphosphate. Catalyzes the attachment of valine to tRNA(Val). As ValRS can inadvertently accommodate and process structurally similar amino acids such as threonine, to avoid such errors, it has a 'posttransfer' editing activity that hydrolyzes mischarged Thr-tRNA(Val) in a tRNA-dependent manner. The protein is Valine--tRNA ligase of Geobacillus kaustophilus (strain HTA426).